Reading from the N-terminus, the 1044-residue chain is R3H domain-containing protein 2 (1044 aa).

Disordered regions lie at residues 23–71 (EESV…AKSN) and 106–147 (SCPS…QEYT). Positions 36 to 56 (PSKEDVEKEGEENGLRQETQR) are enriched in basic and acidic residues. Ser37 bears the Phosphoserine mark. Positions 58–71 (TSSHGHARKRAKSN) are enriched in basic residues. Basic and acidic residues predominate over residues 109–143 (SDKEEEKSTKDVSEKEDKDKSKEKVPRKMLSRDSS). Ser143 carries the phosphoserine modification. The 64-residue stretch at 169–232 (RMMLLKLEQE…AVIINKTSST (64 aa)) folds into the R3H domain. The region spanning 233–303 (RIPEQRFSEH…VRERIFARET (71 aa)) is the SUZ domain. Basic and acidic residues-rich tracts occupy residues 261–270 (DASMDRDDNQ) and 277–288 (DGRRSKSIEERE). Disordered regions lie at residues 261-288 (DASM…EERE), 320-408 (SSSS…LSRP), 433-485 (CTAQ…FSPS), 502-533 (MAED…LFQP), 551-600 (GQPL…SNQQ), 729-770 (GTSP…SPSG), and 807-848 (GQKP…SLSN). Low complexity predominate over residues 338–349 (SRTSSSRQSSTD). A phosphoserine mark is found at Ser362, Ser365, and Ser381. Residues 433-449 (CTAQQQQQQQQQQQQLP) show a composition bias toward low complexity. 2 stretches are compositionally biased toward polar residues: residues 509 to 521 (PFGQ…QGST) and 554 to 572 (LPTS…QQVL). The segment covering 757-770 (PQMSQQYSGVSPSG) has biased composition (low complexity). Residues 818–848 (GSPQANAQMGSSPVTSPTQSPAPSPVTSLSN) are compositionally biased toward polar residues. Ser921 and Ser923 each carry phosphoserine. Thr924 and Thr928 each carry phosphothreonine.

The protein resides in the nucleus. This chain is R3H domain-containing protein 2 (R3hdm2), found in Mus musculus (Mouse).